The following is a 115-amino-acid chain: U3-lycotoxin-Ls1a (115 aa).

Residues 1–20 form the signal peptide; that stretch reads MKFVLLFGVLLVTLFSYSSA. The propeptide occupies 21–44; the sequence is EMLDDFDQADEDELLSSIEKEEAR. 4 disulfides stabilise this stretch: Cys48–Cys63, Cys55–Cys72, Cys62–Cys87, and Cys74–Cys85.

It belongs to the neurotoxin 19 (CSTX) family. 01 subfamily. As to expression, expressed by the venom gland.

The protein localises to the secreted. In Lycosa singoriensis (Wolf spider), this protein is U3-lycotoxin-Ls1a.